The chain runs to 156 residues: ATP synthase subunit b (156 aa).

The chain crosses the membrane as a helical span at residues 7 to 27 (LIGELIAFTVFVLFCMKFVWP).

It belongs to the ATPase B chain family. As to quaternary structure, F-type ATPases have 2 components, F(1) - the catalytic core - and F(0) - the membrane proton channel. F(1) has five subunits: alpha(3), beta(3), gamma(1), delta(1), epsilon(1). F(0) has three main subunits: a(1), b(2) and c(10-14). The alpha and beta chains form an alternating ring which encloses part of the gamma chain. F(1) is attached to F(0) by a central stalk formed by the gamma and epsilon chains, while a peripheral stalk is formed by the delta and b chains.

It is found in the cell inner membrane. Its function is as follows. F(1)F(0) ATP synthase produces ATP from ADP in the presence of a proton or sodium gradient. F-type ATPases consist of two structural domains, F(1) containing the extramembraneous catalytic core and F(0) containing the membrane proton channel, linked together by a central stalk and a peripheral stalk. During catalysis, ATP synthesis in the catalytic domain of F(1) is coupled via a rotary mechanism of the central stalk subunits to proton translocation. Component of the F(0) channel, it forms part of the peripheral stalk, linking F(1) to F(0). The sequence is that of ATP synthase subunit b from Pseudoalteromonas translucida (strain TAC 125).